The primary structure comprises 387 residues: Queuine tRNA-ribosyltransferase (387 aa).

Asp-105 serves as the catalytic Proton acceptor. Substrate contacts are provided by residues 105–109, Asp-177, and Gly-248; that span reads DSGGF. The interval 278-284 is RNA binding; it reads GIGDLPS. The active-site Nucleophile is the Asp-297. The segment at 302 to 306 is RNA binding; important for wobble base 34 recognition; the sequence is TRAAR. Cys-335, Cys-337, Cys-340, and His-366 together coordinate Zn(2+).

Belongs to the queuine tRNA-ribosyltransferase family. As to quaternary structure, homodimer. Within each dimer, one monomer is responsible for RNA recognition and catalysis, while the other monomer binds to the replacement base PreQ1. The cofactor is Zn(2+).

The catalysed reaction is 7-aminomethyl-7-carbaguanine + guanosine(34) in tRNA = 7-aminomethyl-7-carbaguanosine(34) in tRNA + guanine. It participates in tRNA modification; tRNA-queuosine biosynthesis. In terms of biological role, catalyzes the base-exchange of a guanine (G) residue with the queuine precursor 7-aminomethyl-7-deazaguanine (PreQ1) at position 34 (anticodon wobble position) in tRNAs with GU(N) anticodons (tRNA-Asp, -Asn, -His and -Tyr). Catalysis occurs through a double-displacement mechanism. The nucleophile active site attacks the C1' of nucleotide 34 to detach the guanine base from the RNA, forming a covalent enzyme-RNA intermediate. The proton acceptor active site deprotonates the incoming PreQ1, allowing a nucleophilic attack on the C1' of the ribose to form the product. After dissociation, two additional enzymatic reactions on the tRNA convert PreQ1 to queuine (Q), resulting in the hypermodified nucleoside queuosine (7-(((4,5-cis-dihydroxy-2-cyclopenten-1-yl)amino)methyl)-7-deazaguanosine). The chain is Queuine tRNA-ribosyltransferase from Protochlamydia amoebophila (strain UWE25).